We begin with the raw amino-acid sequence, 239 residues long: Ribosomal RNA small subunit methyltransferase G (239 aa).

S-adenosyl-L-methionine is bound by residues Gly-79, Phe-84, 130-131 (AE), and Arg-149.

The protein belongs to the methyltransferase superfamily. RNA methyltransferase RsmG family.

The protein localises to the cytoplasm. In terms of biological role, specifically methylates the N7 position of a guanine in 16S rRNA. This is Ribosomal RNA small subunit methyltransferase G from Pelotomaculum thermopropionicum (strain DSM 13744 / JCM 10971 / SI).